The primary structure comprises 55 residues: Metallothionein-1 (55 aa).

It belongs to the metallothionein superfamily. Type 11 family.

The chain is Metallothionein-1 (MTP1) from Yarrowia lipolytica (strain CLIB 122 / E 150) (Yeast).